Here is a 189-residue protein sequence, read N- to C-terminus: NADH-ubiquinone oxidoreductase 20.9 kDa subunit (189 aa).

A helical membrane pass occupies residues 73 to 88 (AMRLATAVGFFGGFLY).

In terms of assembly, complex I is composed of about 40 different subunits. In terms of processing, the N-terminus is blocked.

The protein localises to the mitochondrion inner membrane. It catalyses the reaction a ubiquinone + NADH + 5 H(+)(in) = a ubiquinol + NAD(+) + 4 H(+)(out). Its function is as follows. Transfer of electrons from NADH to the respiratory chain. The immediate electron acceptor for the enzyme is believed to be ubiquinone. The polypeptide is NADH-ubiquinone oxidoreductase 20.9 kDa subunit (nuo20.9) (Neurospora crassa (strain ATCC 24698 / 74-OR23-1A / CBS 708.71 / DSM 1257 / FGSC 987)).